The primary structure comprises 491 residues: Keratin, type I cytoskeletal 39 (491 aa).

The head stretch occupies residues 1–96; that stretch reads MDTKGCTTTN…WYGEGINSNE (96 aa). The 312-residue stretch at 96–407 folds into the IF rod domain; sequence EKETMQILNE…SLLESSDGKR (312 aa). Residues 97 to 131 form a coil 1A region; it reads KETMQILNERLANYLQKVRMLERENAELESKIQEE. Residues 132-142 are linker 1; that stretch reads SNKELPVLCPD. A coil 1B region spans residues 143-243; the sequence is YLSYYTTIEE…HKEEINSLQC (101 aa). Residues 244–259 are linker 12; that stretch reads QLGERLDIEVTAAPSA. A coil 2 region spans residues 260-403; the sequence is DLNQVLQEMR…TTYRSLLESS (144 aa). The interval 404 to 491 is tail; the sequence is DGKRPCYPRA…PCFIIRPAKV (88 aa).

It belongs to the intermediate filament family. Heterotetramer of two type I and two type II keratins. Expressed in skin and scalp. In the hair follicle, it is present in the upper hair cuticle and the upper cortex. Also present in the in the upper portion of beard hairs (at protein level).

Its function is as follows. May play a role in late hair differentiation. This Homo sapiens (Human) protein is Keratin, type I cytoskeletal 39 (KRT39).